We begin with the raw amino-acid sequence, 471 residues long: 3-isopropylmalate dehydratase large subunit (471 aa).

The [4Fe-4S] cluster site is built by Cys-347, Cys-407, and Cys-410.

The protein belongs to the aconitase/IPM isomerase family. LeuC type 1 subfamily. Heterodimer of LeuC and LeuD. [4Fe-4S] cluster is required as a cofactor.

The catalysed reaction is (2R,3S)-3-isopropylmalate = (2S)-2-isopropylmalate. It functions in the pathway amino-acid biosynthesis; L-leucine biosynthesis; L-leucine from 3-methyl-2-oxobutanoate: step 2/4. Catalyzes the isomerization between 2-isopropylmalate and 3-isopropylmalate, via the formation of 2-isopropylmaleate. This Geobacillus kaustophilus (strain HTA426) protein is 3-isopropylmalate dehydratase large subunit.